The primary structure comprises 229 residues: uncharacterized protein (229 aa).

The segment at 1–102 (MKLLGRKKSY…AASKAQITDR (102 aa)) is disordered. Residues 73 to 94 (ARRKSLAPPKCHRAERRAKRAA) are compositionally biased toward basic residues. A run of 2 helical transmembrane segments spans residues 137–157 (LGLF…VPQL) and 159–179 (LYMS…GIIL).

The protein localises to the cell membrane. This is an uncharacterized protein from Mycobacterium leprae (strain TN).